Reading from the N-terminus, the 419-residue chain is Putative zinc metalloprotease M6_Spy1682 (419 aa).

A Zn(2+)-binding site is contributed by H18. E19 is a catalytic residue. A Zn(2+)-binding site is contributed by H22. 4 consecutive transmembrane segments (helical) span residues 169–191 (LITN…ILLV), 301–323 (LAWS…FSLN), 343–365 (LESV…LIPI), and 392–411 (AYIT…AVTW). Residues 175–274 (GPMNNFILGI…LKTVAVKPQK (100 aa)) enclose the PDZ domain.

Belongs to the peptidase M50B family. Requires Zn(2+) as cofactor.

The protein resides in the cell membrane. The polypeptide is Putative zinc metalloprotease M6_Spy1682 (Streptococcus pyogenes serotype M6 (strain ATCC BAA-946 / MGAS10394)).